The primary structure comprises 712 residues: Matrix metalloproteinase-9 (712 aa).

A signal peptide spans 1–19 (MSPLQPLVLALLVLACCSA). Positions 20-106 (VPRRRQPTVV…PRCGVPDVGR (87 aa)) are cleaved as a propeptide — activation peptide. The N-linked (GlcNAc...) asparagine glycan is linked to Asn38. The Cysteine switch signature appears at 97-104 (PRCGVPDV). Zn(2+) is bound at residue Cys99. Residues Asn120 and Asn127 are each glycosylated (N-linked (GlcNAc...) asparagine). Residues Asp131 and Asp165 each coordinate Ca(2+). Zn(2+)-binding residues include His175 and Asp177. 4 residues coordinate Ca(2+): Asp182, Gly183, Asn185, and Leu187. His190 is a binding site for Zn(2+). Ca(2+) contacts are provided by Gly197, Gln199, and Asp201. His203 is a binding site for Zn(2+). Ca(2+) is bound by residues Asp205, Asp206, and Glu208. Fibronectin type-II domains lie at 225-273 (AKGA…FCPS), 283-331 (ADGK…FCPT), and 342-390 (AAGE…FCPD). Intrachain disulfides connect Cys230-Cys256, Cys244-Cys271, Cys288-Cys314, Cys302-Cys329, Cys347-Cys373, and Cys361-Cys388. His401 contacts Zn(2+). Glu402 is an active-site residue. Residues His405 and His411 each contribute to the Zn(2+) site. Residues 440–519 (QHLYGPRPEP…PTESPDPAED (80 aa)) form a disordered region. A compositionally biased stretch (low complexity) spans 455–465 (TTTTTTTTEPQ). Over residues 491–504 (TGPPAAGPTGPPTA) the composition is skewed to pro residues. The segment covering 505 to 514 (GPSAAPTESP) has biased composition (low complexity). A disulfide bridge links Cys521 with Cys709. 4 Hemopexin repeats span residues 523-568 (VDIF…WPAL), 569-613 (PRKL…GLGP), 615-662 (VAQV…FPGV), and 663-709 (PIST…LLKC).

It belongs to the peptidase M10A family. In terms of assembly, exists as monomer or homodimer; disulfide-linked. Also exists as heterodimer with LCN2. Macrophages and transformed cell lines produce only the monomeric form. Interacts with ECM1. It depends on Zn(2+) as a cofactor. Ca(2+) is required as a cofactor. N- and O-glycosylated.

It localises to the secreted. The protein localises to the extracellular space. Its subcellular location is the extracellular matrix. It carries out the reaction Cleavage of gelatin types I and V and collagen types IV and V.. In terms of biological role, matrix metalloproteinase that plays an essential role in local proteolysis of the extracellular matrix and in leukocyte migration. Could play a role in bone osteoclastic resorption. Cleaves KiSS1 at a Gly-|-Leu bond. Cleaves NINJ1 to generate the Secreted ninjurin-1 form. Cleaves type IV and type V collagen into large C-terminal three quarter fragments and shorter N-terminal one quarter fragments. Degrades fibronectin but not laminin or Pz-peptide. This chain is Matrix metalloproteinase-9, found in Bos taurus (Bovine).